The following is a 629-amino-acid chain: Coiled-coil domain-containing protein 120 (629 aa).

The interval 31 to 70 (RLRGLLDRQRALQEALSVKLQELRKVCLQEAELTGQLPPE) is involved in CYTH2-binding. Residues 109 to 173 (ELALEALERE…LRDFRARLGL (65 aa)) adopt a coiled-coil conformation. Composition is skewed to low complexity over residues 209-219 (HSESSSLSESG) and 279-294 (ASPT…SASS). A disordered region spans residues 209 to 356 (HSESSSLSES…LFAARTRRSN (148 aa)). Residues 323 to 332 (RQWSGSQDSQ) show a composition bias toward polar residues. 2 positions are modified to phosphoserine: Ser355 and Ser357. 2 disordered regions span residues 399 to 432 (QPVP…GAPR) and 602 to 629 (PSQA…FTDG). A compositionally biased stretch (low complexity) spans 418–432 (ARPSSAAPASRGAPR). The residue at position 432 (Arg432) is an Omega-N-methylarginine.

As to quaternary structure, interacts with NIN and CEP170; leading to recruit them to centrosomes. Interacts with CYTH2; this interaction is direct and stabilizes CCDC120, possibly by preventing ubiquitination. In terms of processing, ubiquitinated; interaction with CYTH2 may prevent ubiquitination.

It is found in the cytoplasm. Its subcellular location is the cytoskeleton. The protein resides in the microtubule organizing center. It localises to the centrosome. The protein localises to the centriole. It is found in the cell projection. Its subcellular location is the neuron projection. The protein resides in the growth cone. It localises to the endosome. Functionally, centriolar protein required for centriole subdistal appendage assembly and microtubule anchoring in interphase cells. Together with CCDC68, cooperate with subdistal appendage components ODF2, NIN and CEP170 for hierarchical subdistal appendage assembly. Recruits NIN and CEP170 to centrosomes. Also required for neurite growth. Localizes CYTH2 to vesicles to allow its transport along neurites, and subsequent ARF6 activation and neurite growth. The sequence is that of Coiled-coil domain-containing protein 120 from Mus musculus (Mouse).